Reading from the N-terminus, the 351-residue chain is MVNDFNEKNGIKKRLLDFFPVVLEGIREILESMQYFPEETEKLLYSIKRNTLGGKNNRGLAVLQSLTSLINRELEEAEFRDAALLGWLIEILQGCFLMADDIMDQSIKRRGLDCWYLVVGVRRAINESQLLEACIPLLIRKYFRNMPYYVDLLDTFREVTFLTELGQQEDLLSSRDGEASLRSFDLMKYDFIITYKTSFYSFYLPIKCALLLSRNSNQKAYDTTIKLSKLLGYYFQVQDDYLDCFGDYTVLGKVGMDIQDNKCTWLVCYAEKFASADQLNLLRAHYGKAGSENIAVIKQLYHELQIPELYHKFEDDMVDSISKEIDLIDESTGLKKCIFTKFFQLIYKRSR.

Residues Lys55, Arg58, and Gln93 each coordinate isopentenyl diphosphate. Mg(2+) contacts are provided by Asp100 and Asp104. Arg109 is a binding site for dimethylallyl diphosphate. Arg110 is a binding site for isopentenyl diphosphate. Residues Lys196, Thr197, Gln236, Lys253, and Lys262 each contribute to the dimethylallyl diphosphate site.

It belongs to the FPP/GGPP synthase family. In terms of assembly, interacts with fps1. Mg(2+) serves as cofactor.

The protein resides in the cytoplasm. The protein localises to the nucleus. The catalysed reaction is isopentenyl diphosphate + dimethylallyl diphosphate = (2E)-geranyl diphosphate + diphosphate. It carries out the reaction isopentenyl diphosphate + (2E)-geranyl diphosphate = (2E,6E)-farnesyl diphosphate + diphosphate. The enzyme catalyses isopentenyl diphosphate + (2E,6E)-farnesyl diphosphate = (2E,6E,10E)-geranylgeranyl diphosphate + diphosphate. It functions in the pathway isoprenoid biosynthesis; farnesyl diphosphate biosynthesis; farnesyl diphosphate from geranyl diphosphate and isopentenyl diphosphate: step 1/1. It participates in isoprenoid biosynthesis; geranyl diphosphate biosynthesis; geranyl diphosphate from dimethylallyl diphosphate and isopentenyl diphosphate: step 1/1. Its pathway is isoprenoid biosynthesis; geranylgeranyl diphosphate biosynthesis; geranylgeranyl diphosphate from farnesyl diphosphate and isopentenyl diphosphate: step 1/1. Functionally, catalyzes the trans-addition of the 3 molecules of IPP onto DMAPP to form geranylgeranyl pyrophosphate. Required for the membrane attachment of ypt7 and rhb1. May be involved in vesicle trafficking and protein sorting. Required for forespore membrane formation. In Schizosaccharomyces pombe (strain 972 / ATCC 24843) (Fission yeast), this protein is Geranylgeranyl pyrophosphate synthase (spo9).